Consider the following 97-residue polypeptide: DNA-directed RNA polymerase subunit omega (97 aa).

The span at 1 to 16 (MSTPNALAAFNSSPSL) shows a compositional bias: polar residues. Positions 1–21 (MSTPNALAAFNSSPSLNAPEG) are disordered.

This sequence belongs to the RNA polymerase subunit omega family. The RNAP catalytic core consists of 2 alpha, 1 beta, 1 beta' and 1 omega subunit. When a sigma factor is associated with the core the holoenzyme is formed, which can initiate transcription.

The catalysed reaction is RNA(n) + a ribonucleoside 5'-triphosphate = RNA(n+1) + diphosphate. Functionally, promotes RNA polymerase assembly. Latches the N- and C-terminal regions of the beta' subunit thereby facilitating its interaction with the beta and alpha subunits. The polypeptide is DNA-directed RNA polymerase subunit omega (Saccharopolyspora erythraea (strain ATCC 11635 / DSM 40517 / JCM 4748 / NBRC 13426 / NCIMB 8594 / NRRL 2338)).